A 185-amino-acid polypeptide reads, in one-letter code: Ribosome-recycling factor (185 aa).

It belongs to the RRF family.

It localises to the cytoplasm. In terms of biological role, responsible for the release of ribosomes from messenger RNA at the termination of protein biosynthesis. May increase the efficiency of translation by recycling ribosomes from one round of translation to another. This chain is Ribosome-recycling factor, found in Streptococcus gordonii (strain Challis / ATCC 35105 / BCRC 15272 / CH1 / DL1 / V288).